Here is a 392-residue protein sequence, read N- to C-terminus: Na(+)/H(+) antiporter NhaA 2 (392 aa).

A run of 11 helical transmembrane segments spans residues F20–I40, V63–I83, A99–F119, I127–L147, I158–F178, S181–L201, L209–H229, V265–I285, V298–I318, G336–F356, and E365–L385.

This sequence belongs to the NhaA Na(+)/H(+) (TC 2.A.33) antiporter family.

The protein resides in the cell inner membrane. It catalyses the reaction Na(+)(in) + 2 H(+)(out) = Na(+)(out) + 2 H(+)(in). Its function is as follows. Na(+)/H(+) antiporter that extrudes sodium in exchange for external protons. This Pseudomonas savastanoi pv. phaseolicola (strain 1448A / Race 6) (Pseudomonas syringae pv. phaseolicola (strain 1448A / Race 6)) protein is Na(+)/H(+) antiporter NhaA 2.